The sequence spans 315 residues: Beta-carotene hydroxylase 1, chloroplastic (315 aa).

A chloroplast-targeting transit peptide spans 1-58 (MAAEISISASSRAICLQRNPFPAPKYFATAPPLLFFSPLTCNLDAILRSRRKPRLAAC). 2 consecutive transmembrane segments (helical) span residues 112–132 (YLVA…ISVY) and 146–166 (FSEM…MEYW). A Fatty acid hydroxylase domain is found at 159 to 286 (AAIGMEYWAR…KFDGVPYGLF (128 aa)). Positions 171–176 (HRALWH) match the Histidine box-1 motif. The short motif at 183–187 (HESHH) is the Histidine box-2 element. The next 2 helical transmembrane spans lie at 196–216 (LNDI…SFGF) and 222–242 (IPGL…AYMF). A Histidine box-3 motif is present at residues 244–249 (HDGLVH). The Histidine box-4 signature appears at 270–274 (HQLHH).

The protein belongs to the sterol desaturase family.

The protein localises to the plastid. The protein resides in the chloroplast membrane. It carries out the reaction all-trans-beta-carotene + 4 reduced [2Fe-2S]-[ferredoxin] + 2 O2 + 4 H(+) = all-trans-zeaxanthin + 4 oxidized [2Fe-2S]-[ferredoxin] + 2 H2O. The catalysed reaction is all-trans-beta-carotene + 2 reduced [2Fe-2S]-[ferredoxin] + O2 + 2 H(+) = beta-cryptoxanthin + 2 oxidized [2Fe-2S]-[ferredoxin] + H2O. It catalyses the reaction beta-cryptoxanthin + 2 reduced [2Fe-2S]-[ferredoxin] + O2 + 2 H(+) = all-trans-zeaxanthin + 2 oxidized [2Fe-2S]-[ferredoxin] + H2O. Its activity is regulated as follows. Inhibited by o-phenanthroline and 8-hydroxyquinoline. Its function is as follows. Nonheme diiron monooxygenase involved in the biosynthesis of xanthophylls. Specific for beta-ring hydroxylations of beta-carotene. Produces beta-cryptoxanthin and zeaxanthin. Uses ferredoxin as an electron donor. The polypeptide is Beta-carotene hydroxylase 1, chloroplastic (Capsicum annuum (Capsicum pepper)).